Here is a 254-residue protein sequence, read N- to C-terminus: Alcohol dehydrogenase (254 aa).

10-33 is an NAD(+) binding site; the sequence is FVAGLGGIGLDTSREIVKSGPKNL. Residue S138 participates in substrate binding. The active-site Proton acceptor is the Y151.

This sequence belongs to the short-chain dehydrogenases/reductases (SDR) family. As to quaternary structure, homodimer.

The enzyme catalyses a primary alcohol + NAD(+) = an aldehyde + NADH + H(+). It carries out the reaction a secondary alcohol + NAD(+) = a ketone + NADH + H(+). This is Alcohol dehydrogenase (Adh) from Drosophila grimshawi (Hawaiian fruit fly).